The chain runs to 350 residues: MRVKAPGRINIIGEHTDYNDGYVLPFAVNRFVFLTIEDSGKFVFHSENMNETVEMEKIEKLNRWTDYISGVIKAFEKRGYKVSPVKISVSSNLPMGAGLSSSAALEMATAYAISEHFGFHLPKLELVKIAREAEVEFVGVRCGIMDQFTSAFGKKDHAIFLDTMTLEYEYVPLKLEGYEINLVDSNVKHELSSSEYNKRRQECEEVLRVLGKRSFREVTKEDLKKLPDVLKKRAQHVLEENERVLKSVQALKEGDFETLGRLLFSSHESLRDLYEVSCEQTDFIVDFLKGREGILGARMVGGGFGGGVIVLSKKGAFEKIKEELKNAYRDRFKIELTFHEIESADGVQKI.

14 to 17 contacts substrate; the sequence is EHTD. ATP is bound by residues Ser46 and 96-102; that span reads GAGLSSS. Residues Ser102 and Glu134 each contribute to the Mg(2+) site. The Proton acceptor role is filled by Asp146. Tyr196 lines the substrate pocket.

It belongs to the GHMP kinase family. GalK subfamily.

It is found in the cytoplasm. The enzyme catalyses alpha-D-galactose + ATP = alpha-D-galactose 1-phosphate + ADP + H(+). The protein operates within carbohydrate metabolism; galactose metabolism. Its function is as follows. Catalyzes the transfer of the gamma-phosphate of ATP to D-galactose to form alpha-D-galactose-1-phosphate (Gal-1-P). The polypeptide is Galactokinase (Thermotoga neapolitana).